The following is a 695-amino-acid chain: MRRHRPYLDGVAAAAATFLLAVLLHAPLAAGEDEPPPWVLCGPYPPSGNYSKNGTYQVNLDLLSTTLPKNTSSSPAMYATGTVGDVPDKVYGLALCRGDANASACERCVAAALRDAPRRCPLVKDVLVFYDLCQLRYSNRDFFLDDDYFVTTYTLQRSRRVGAAAAAAFDAAVAVLVNATADYAAADSSRRYGTGEEEGVDGDSDRPKIYALAQCTPDKTPEVCRTCLSTVIGQLPKEFSGRTGGGMFGVWCNFRYEVFPFFSGRPLLQLPAFVETPPPPPSPSATSGEKTKNRIGTVLAIVMPAIAAILLMVVACFCCWKRIKKRRPEEQTFLSYSVSSDDIQSIDSLILDLPTIRVATDDFADTKMIGQGGFGMVYKGVLPDGQEIAVKRLCQSSRQGIGELKSELILVAKLYHKNLVRLIGVCLEQQEKILVYEYMPNGSLDIVLFDTDKNRELDWGKRFKIINGIARGLQYLHEDSQLKIVHRDLKASNILLDFDYSPKISDFGLAKIFGGDQSEDVTNRIAGTYGYMAPEYAMRGNYSIKSDVFSFGVLVLEIITGRRNTGSYDSGQDVDLLNLVWEHWTRGNVVELIDPSMGDHPPIEQMLKCIHIGLLCVQKKPASRPTISSVNIMLSSNTVRLPSLSRPAFCIQEVSASDSSNPYSERYPRPRHSGYSDNSTVVSSNDLSITELVPR.

The first 31 residues, 1–31 (MRRHRPYLDGVAAAAATFLLAVLLHAPLAAG), serve as a signal peptide directing secretion. The Extracellular segment spans residues 32-294 (EDEPPPWVLC…ATSGEKTKNR (263 aa)). Gnk2-homologous domains lie at 38-142 (WVLC…NRDF) and 151-261 (TTYT…VFPF). N-linked (GlcNAc...) asparagine glycosylation is found at N49, N53, N70, and N101. Disulfide bonds link C96-C105 and C108-C133. A glycan (N-linked (GlcNAc...) asparagine) is linked at N178. 2 disulfides stabilise this stretch: C215–C224 and C227–C252. Residues 295 to 315 (IGTVLAIVMPAIAAILLMVVA) traverse the membrane as a helical segment. Over 316–695 (CFCCWKRIKK…DLSITELVPR (380 aa)) the chain is Cytoplasmic. Residues 363 to 634 (FADTKMIGQG…PTISSVNIML (272 aa)) enclose the Protein kinase domain. ATP contacts are provided by residues 369-377 (IGQGGFGMV) and K391. D488 serves as the catalytic Proton acceptor. Positions 658-682 (DSSNPYSERYPRPRHSGYSDNSTVV) are disordered.

Belongs to the protein kinase superfamily. Ser/Thr protein kinase family. CRK subfamily.

It localises to the membrane. Functionally, involved in disease resistance. Required for NPR1/NH1-mediated immunity to the bacterial blight pathogen Xanthomomas oryzae pv. oryzae (Xoo). Required for the benzothiadiazole (BTH)-induced immune response. Possesses kinase activity in vitro. The polypeptide is Cysteine-rich receptor-like protein kinase 6 (Oryza sativa subsp. japonica (Rice)).